A 396-amino-acid chain; its full sequence is CCA-adding enzyme (396 aa).

ATP-binding residues include glycine 32 and arginine 35. The CTP site is built by glycine 32 and arginine 35. Mg(2+) is bound by residues aspartate 45 and aspartate 47. ATP contacts are provided by arginine 116, aspartate 159, arginine 162, arginine 165, and arginine 168. Residues arginine 116, aspartate 159, arginine 162, arginine 165, and arginine 168 each coordinate CTP.

It belongs to the tRNA nucleotidyltransferase/poly(A) polymerase family. Bacterial CCA-adding enzyme type 3 subfamily. Homodimer. It depends on Mg(2+) as a cofactor.

The enzyme catalyses a tRNA precursor + 2 CTP + ATP = a tRNA with a 3' CCA end + 3 diphosphate. It carries out the reaction a tRNA with a 3' CCA end + 2 CTP + ATP = a tRNA with a 3' CCACCA end + 3 diphosphate. Functionally, catalyzes the addition and repair of the essential 3'-terminal CCA sequence in tRNAs without using a nucleic acid template. Adds these three nucleotides in the order of C, C, and A to the tRNA nucleotide-73, using CTP and ATP as substrates and producing inorganic pyrophosphate. tRNA 3'-terminal CCA addition is required both for tRNA processing and repair. Also involved in tRNA surveillance by mediating tandem CCA addition to generate a CCACCA at the 3' terminus of unstable tRNAs. While stable tRNAs receive only 3'-terminal CCA, unstable tRNAs are marked with CCACCA and rapidly degraded. This Lactobacillus delbrueckii subsp. bulgaricus (strain ATCC BAA-365 / Lb-18) protein is CCA-adding enzyme.